The following is a 213-amino-acid chain: tRNA (guanine-N(7)-)-methyltransferase (213 aa).

Positions 44, 69, 96, and 118 each coordinate S-adenosyl-L-methionine. Residue D118 is part of the active site. Residue K122 participates in substrate binding. The interaction with RNA stretch occupies residues 124–129; that stretch reads RHEKRR. Substrate contacts are provided by residues D154 and 191 to 194; that span reads TEYE.

The protein belongs to the class I-like SAM-binding methyltransferase superfamily. TrmB family.

It carries out the reaction guanosine(46) in tRNA + S-adenosyl-L-methionine = N(7)-methylguanosine(46) in tRNA + S-adenosyl-L-homocysteine. It participates in tRNA modification; N(7)-methylguanine-tRNA biosynthesis. Its function is as follows. Catalyzes the formation of N(7)-methylguanine at position 46 (m7G46) in tRNA. The protein is tRNA (guanine-N(7)-)-methyltransferase of Bacillus licheniformis (strain ATCC 14580 / DSM 13 / JCM 2505 / CCUG 7422 / NBRC 12200 / NCIMB 9375 / NCTC 10341 / NRRL NRS-1264 / Gibson 46).